The primary structure comprises 316 residues: MRSPVPRFRDVERQASGLQPPQCLPSCHERQSSMWFIKDACGIVCAIITWFLVFFAEFVVLFVMLIPSKNLTYSLVNGTLFNSLAFLALASHFRAMCTDPGAVPKGNATKEYIESLQLKPGQVVYKCPKCCSIKPDRAHHCSVCKRCIRKMDHHCPWVNNCVGENNQKYFVLFTMYICLISLHSLVMVVFHFLNCFEDDWTKCSTFSPPATVILLILLCFEGLLFLIFTSVMFGTQVHSICTDETGIEKLKREDPTWEKTQCWEGMKSAFGGPLSVTWFSPFTDLSCQKDDSSPVPMFPQGEIIEEDVIEIPLEPH.

Residues Met1–Cys45 are Cytoplasmic-facing. A helical membrane pass occupies residues Ala46–Ile66. At Pro67–Asn70 the chain is on the lumenal side. The chain crosses the membrane as a helical span at residues Leu71–Ser91. Topologically, residues His92–Tyr169 are cytoplasmic. The DHHC domain occupies Val124–Met175. A lipid anchor (S-palmitoyl cysteine) is attached at Cys144. Cys155 (S-palmitoyl cysteine intermediate) is an active-site residue. Residues Phe170–Phe190 form a helical membrane-spanning segment. The Lumenal portion of the chain corresponds to His191–Val212. A helical membrane pass occupies residues Ile213–Phe233. Residues Gly234–His316 are Cytoplasmic-facing.

The protein belongs to the DHHC palmitoyltransferase family. In terms of assembly, monomer. Homooligomers. The monomeric form has a higher catalytic activity. Forms heterooligomers with zdhhc7. In terms of processing, autopalmitoylated.

Its subcellular location is the golgi apparatus membrane. It catalyses the reaction L-cysteinyl-[protein] + hexadecanoyl-CoA = S-hexadecanoyl-L-cysteinyl-[protein] + CoA. It carries out the reaction L-cysteinyl-[protein] + tetradecanoyl-CoA = S-tetradecanoyl-L-cysteinyl-[protein] + CoA. The enzyme catalyses L-cysteinyl-[protein] + octadecanoyl-CoA = S-octadecanoyl-L-cysteinyl-[protein] + CoA. Its function is as follows. Golgi-localized palmitoyltransferase that catalyzes the addition of palmitate onto various protein substrates and regulates their association with membranes. Has no stringent fatty acid selectivity and in addition to palmitate can also transfer onto target proteins myristate from tetradecanoyl-CoA and stearate from octadecanoyl-CoA. The protein is Palmitoyltransferase ZDHHC3-A (zdhhc3a) of Danio rerio (Zebrafish).